Here is a 609-residue protein sequence, read N- to C-terminus: Cell division protein DipM (609 aa).

The first 24 residues, 1-24, serve as a signal peptide directing secretion; it reads MRQLWTQAAVIALTAGTLGAPAHA. The tract at residues 21 to 103 is disordered; sequence PAHASGQSGQ…PVLRATPPRT (83 aa). The segment covering 25–38 has biased composition (polar residues); the sequence is SGQSGQRFTPNFPI. Residues 79 to 93 show a composition bias toward pro residues; sequence LPPPAPVSTPAPAPQ. LysM domains are found at residues 121–165 and 171–215; these read QVRV…KIKG and KAYV…KLLL. Composition is skewed to low complexity over residues 242 to 258 and 265 to 280; these read AEPAPATTRPATPAATP and PVSEETSEPATTSTTT. The disordered stretch occupies residues 242 to 280; sequence AEPAPATTRPATPAATPSRPVRQPVSEETSEPATTSTTT. LysM domains are found at residues 295 to 339 and 345 to 389; these read QVHT…KIKG and KAYS…KIAL. The disordered stretch occupies residues 389–457; the sequence is LPDGFRDKGP…AAQPITPPPS (69 aa). Low complexity predominate over residues 400–429; the sequence is RTTTTTRPATPPANTYARVDSSAAAASTPS. The tract at residues 503-603 is lytM; the sequence is NDGLNIRAPQ…VKDKAKPVDP (101 aa).

The protein localises to the periplasm. In terms of biological role, required for efficient cell division, cell polarity and normal cell morphology. Facilitates remodeling of the peptidoglycan layer and, thus, coordinated constriction of the cell envelope during the division process. Plays a critical role in maintaining proper cell envelope architecture during growth and division. Required for normal envelope invagination during cell division and to establish or maintain outer membrane connections throughout the cell envelope. May serve as a regulatory hub coordinating the activities of multiple peptidoglycan-degrading enzymes during cell constriction. Required to position SdpA and SdpB at midcell. The chain is Cell division protein DipM from Caulobacter vibrioides (strain NA1000 / CB15N) (Caulobacter crescentus).